A 194-amino-acid chain; its full sequence is ATP-dependent Clp protease proteolytic subunit (194 aa).

The active-site Nucleophile is Ser98. His123 is a catalytic residue.

This sequence belongs to the peptidase S14 family. In terms of assembly, fourteen ClpP subunits assemble into 2 heptameric rings which stack back to back to give a disk-like structure with a central cavity, resembling the structure of eukaryotic proteasomes.

It localises to the cytoplasm. The enzyme catalyses Hydrolysis of proteins to small peptides in the presence of ATP and magnesium. alpha-casein is the usual test substrate. In the absence of ATP, only oligopeptides shorter than five residues are hydrolyzed (such as succinyl-Leu-Tyr-|-NHMec, and Leu-Tyr-Leu-|-Tyr-Trp, in which cleavage of the -Tyr-|-Leu- and -Tyr-|-Trp bonds also occurs).. Functionally, cleaves peptides in various proteins in a process that requires ATP hydrolysis. Has a chymotrypsin-like activity. Plays a major role in the degradation of misfolded proteins. The chain is ATP-dependent Clp protease proteolytic subunit from Syntrophus aciditrophicus (strain SB).